The following is a 365-amino-acid chain: tRNA N6-adenosine threonylcarbamoyltransferase (365 aa).

Fe cation is bound by residues His119 and His123. Residues 141–145 (LVSGG), Asp174, Gly187, and Asn289 each bind substrate. Asp317 is a binding site for Fe cation. The disordered stretch occupies residues 341 to 365 (SARPRWPLDKTSPALIGSGKKGAKA).

The protein belongs to the KAE1 / TsaD family. It depends on Fe(2+) as a cofactor.

Its subcellular location is the cytoplasm. It catalyses the reaction L-threonylcarbamoyladenylate + adenosine(37) in tRNA = N(6)-L-threonylcarbamoyladenosine(37) in tRNA + AMP + H(+). In terms of biological role, required for the formation of a threonylcarbamoyl group on adenosine at position 37 (t(6)A37) in tRNAs that read codons beginning with adenine. Is involved in the transfer of the threonylcarbamoyl moiety of threonylcarbamoyl-AMP (TC-AMP) to the N6 group of A37, together with TsaE and TsaB. TsaD likely plays a direct catalytic role in this reaction. This chain is tRNA N6-adenosine threonylcarbamoyltransferase, found in Ruegeria sp. (strain TM1040) (Silicibacter sp.).